A 1402-amino-acid chain; its full sequence is MESVEEKSKQRRWLPNFKALRLKVYRLADRLNIPLADAARVELEEYDGSDPQSLRGLQKLPRTLYFGLPLPDSELDDTGEAKRWFPRNKIRTAKYTPIDFIPKNIFLQFQNVANLFFLFLVILQSISIFGEQVNPGLAAVPLIVVVGITAVKDAIEDFRRTMLDIHLNNTPTLRLSHYQNPNIRTEYISYFRRFKKRISALFRVFLAKQEEKKRAKRLNDAVPLEDMAGSESRPSYDSIFRESFEAKRSFEDSKGKVPLSALDGTATILQSRPMDIIDYEAEATGECHFKKTYWKDVRVGDFVKVMDNDEIPADIVIINSSDPEGICYIETKNLDGETNLKMRHALTCGKNVVDEASCERCRFWIESEPPHANLYEYNGACKSFVHSEAGGSDTSQTVSEPISLDSMLLRGCVLRNTKWVIGVVVFTGDDTKIMLNSGAPPLKRSRITRNLNWNVYLNFIILFSMCFVCAVVEGIAWRGHSRSSYYFEFGSIGGSPAKDGVVTFFTGVILFQNLVPISLYISIEIVKTIQAIFIYFDKDMYYKKLKYACTPKSWNISDDLGQVEYIFSDKTGTLTQNVMEFKKCTINGVAYGEAFTEAMAGMAKREGKDTEELTLQKQSFIERDRMQMISQMRNMHDNKYLVDDNLTFISSQFVHDLAGKAGEEQSLACYEFFLALALCHSVVADRVGDRIVYKAQSPDEAALVGTARDVGFVFLDQRRDIMVTRALGETQRFKLMDTIEFSSARKRMSVIVKGPDNRYVLICKGADSIIFERLEPNEQVELRKTTSEHLRIFALEGLRTLCIAKRELTEEEYYEWKEKYDIAASAIENREEQIEEVADLIESHLTLLGGTAIEDRLQEGVPDSIALLAQAGIKLWVLTGDKMETAINIGFSCNLLDAGMDMIKFDVDQEVSTPELEVILADYLYRYFGLSGSVEELEAAKKDHDTPSGSHALVIDGSVLKRVLDGPMRTKFLLLCKRCKAVLCCRVSPAQKADVVQLVRESLEVMTLAIGDGANDVAMIQKADIGVGIVGEEGRAAAMSADYAIGQFRFLSKLVLVHGRWDYNRVAEMVNNFFYKSVVWTFTLFWYQIYNNFDANYLFDYTYVMLFNLIFSSLPVIVMGVYDQDVNADLSLRIPQLYKRGILQLNSARKIFIGYMLDGFYQSVICFFFSFLVINNVTTAAQNGRDTMAVQDLGVYVAAPTIMVVDTYVILNQSNWDVFSIGLWALSCLTFWFWTGVYSQSLYTYEFYKSASRIFRTPNFWAVLCGTIVSCLFPKFLFMTTQKLFWPYDVDIIRESYRTKRLHELDEEEEIENAEQSPDWASSTLQVPFNASSSSLATPKKEPLRLDTNSLTLTSSMPRSFTPSYTPSFLEGSPVFSDEILNRGEYMPHRGSISSSEQPLRP.

4 helical membrane passes run 109–129 (FQNVANLFFLFLVILQSISIF), 135–155 (PGLAAVPLIVVVGITAVKDAI), 457–477 (LNFIILFSMCFVCAVVEGIAW), and 501–521 (VVTFFTGVILFQNLVPISLYI). Asp569 serves as the catalytic 4-aspartylphosphate intermediate. Asp569, Lys570, Thr571, Glu700, Phe741, Ser743, Lys746, Lys764, Arg799, Thr800, Thr879, Gly880, Asp881, Arg986, and Lys992 together coordinate ATP. Asp569 provides a ligand contact to Mg(2+). Thr571 is a binding site for Mg(2+). Asp1012 is a binding site for Mg(2+). The ATP site is built by Asn1015 and Asp1016. Mg(2+) is bound at residue Asp1016. 6 consecutive transmembrane segments (helical) span residues 1066–1086 (VAEMVNNFFYKSVVWTFTLFW), 1101–1121 (YTYVMLFNLIFSSLPVIVMGV), 1151–1171 (IFIGYMLDGFYQSVICFFFSF), 1193–1213 (LGVYVAAPTIMVVDTYVILNQ), 1218–1238 (VFSIGLWALSCLTFWFWTGVY), and 1260–1280 (FWAVLCGTIVSCLFPKFLFMT). Lys1275 serves as a coordination point for a 1,2-diacyl-sn-glycero-3-phospho-L-serine.

It belongs to the cation transport ATPase (P-type) (TC 3.A.3) family. Type IV subfamily. The cofactor is Mg(2+).

Its subcellular location is the cell membrane. The protein resides in the endoplasmic reticulum membrane. The enzyme catalyses ATP + H2O + phospholipidSide 1 = ADP + phosphate + phospholipidSide 2.. It carries out the reaction a 1,2-diacyl-sn-glycero-3-phosphoethanolamine(out) + ATP + H2O = a 1,2-diacyl-sn-glycero-3-phosphoethanolamine(in) + ADP + phosphate + H(+). The catalysed reaction is a 1,2-diacyl-sn-glycero-3-phosphocholine(out) + ATP + H2O = a 1,2-diacyl-sn-glycero-3-phosphocholine(in) + ADP + phosphate + H(+). It catalyses the reaction a beta-D-glucosyl-(1&lt;-&gt;1')-N-acylsphing-4-enine(out) + ATP + H2O = a beta-D-glucosyl-(1&lt;-&gt;1')-N-acylsphing-4-enine(in) + ADP + phosphate + H(+). The enzyme catalyses a 1,2-diacyl-sn-glycero-3-phospho-L-serine(out) + ATP + H2O = a 1,2-diacyl-sn-glycero-3-phospho-L-serine(in) + ADP + phosphate + H(+). In terms of biological role, catalytic component of a P4-ATPase flippase complex which catalyzes the hydrolysis of ATP coupled to the transport of glucosylceramide, phosphatidylcholine, phosphatidylethanolamine, and small amounts of phosphatidylserine from the lumenal to the cytosolic leaflet of the cell membrane and ensures the maintenance of asymmetric distribution of phospholipids. This Schizosaccharomyces pombe (strain 972 / ATCC 24843) (Fission yeast) protein is Phospholipid-transporting ATPase dnf2.